The chain runs to 478 residues: Sialidase-4 (478 aa).

The FRIP motif motif lies at Tyr-22–Pro-25. 2 residues coordinate substrate: Arg-23 and Arg-43. Residues Asp-47 and Asp-48 each act as proton acceptor in the active site. One copy of the BNR 1 repeat lies at Val-127–Ser-138. Positions 177 and 179 each coordinate substrate. Residues Phe-200–Cys-211 form a BNR 2 repeat. The substrate site is built by Glu-222 and Arg-238. Residues Ala-247–Pro-258 form a BNR 3 repeat. 2 disordered regions span residues Ile-285 to Leu-307 and Ser-335 to Pro-359. Residue Arg-383 participates in substrate binding. The Nucleophile role is filled by Tyr-413. Glu-434 is an active-site residue.

The protein belongs to the glycosyl hydrolase 33 family. In terms of tissue distribution, highly expressed in brain, particularly in hippocampus, and at lower levels in liver and spleen. Expressed in hippocampal neurons (at protein level).

It is found in the cell membrane. Its subcellular location is the endoplasmic reticulum membrane. The protein localises to the microsome membrane. It localises to the mitochondrion inner membrane. The protein resides in the mitochondrion outer membrane. It is found in the cell projection. Its subcellular location is the neuron projection. The protein localises to the lysosome lumen. It catalyses the reaction Hydrolysis of alpha-(2-&gt;3)-, alpha-(2-&gt;6)-, alpha-(2-&gt;8)- glycosidic linkages of terminal sialic acid residues in oligosaccharides, glycoproteins, glycolipids, colominic acid and synthetic substrates.. It carries out the reaction a ganglioside GM3 + H2O = a beta-D-galactosyl-(1-&gt;4)-beta-D-glucosyl-(1&lt;-&gt;1)-ceramide + N-acetylneuraminate. The catalysed reaction is a ganglioside GM3 (d18:1(4E)) + H2O = a beta-D-Gal-(1-&gt;4)-beta-D-Glc-(1&lt;-&gt;1)-Cer(d18:1(4E)) + N-acetylneuraminate. The enzyme catalyses a ganglioside GM2 + H2O = a ganglioside GA2 + N-acetylneuraminate. It catalyses the reaction a ganglioside GM2 (d18:1(4E)) + H2O = a ganglioside GA2 (d18:1(4E)) + N-acetylneuraminate. It carries out the reaction a ganglioside GD1a + H2O = a ganglioside GM1 + N-acetylneuraminate. The catalysed reaction is a ganglioside GD1a (d18:1(4E)) + H2O = a ganglioside GM1 (d18:1(4E)) + N-acetylneuraminate. The enzyme catalyses a ganglioside GD3 + H2O = a ganglioside GM3 + N-acetylneuraminate. It catalyses the reaction a ganglioside GD3 (d18:1(4E)) + H2O = a ganglioside GM3 (d18:1(4E)) + N-acetylneuraminate. Its function is as follows. Exo-alpha-sialidase that catalyzes the hydrolytic cleavage of the terminal sialic acid (N-acetylneuraminic acid, Neu5Ac) of a glycan moiety in the catabolism of glycolipids, glycoproteins and oligosacharides. Efficiently hydrolyzes gangliosides including alpha-(2-&gt;3)-sialylated GD1a and GM3 and alpha-(2-&gt;8)-sialylated GD3. Hydrolyzes poly-alpha-(2-&gt;8)-sialylated neural cell adhesion molecule NCAM1 likely at growth cones, suppressing neurite outgrowth in hippocampal neurons. May desialylate sialyl Lewis A and X antigens at the cell surface, down-regulating these glycan epitopes recognized by SELE/E selectin in the initiation of cell adhesion and extravasation. Has sialidase activity toward mucin, fetuin and sialyllactose. The protein is Sialidase-4 (Neu4) of Mus musculus (Mouse).